A 442-amino-acid polypeptide reads, in one-letter code: Histidinol dehydrogenase (442 aa).

NAD(+) is bound by residues Tyr142, Gln204, and Asn227. Positions 250, 272, and 275 each coordinate substrate. Residues Gln272 and His275 each contribute to the Zn(2+) site. Catalysis depends on proton acceptor residues Glu340 and His341. 4 residues coordinate substrate: His341, Asp374, Glu428, and His433. Asp374 is a binding site for Zn(2+). His433 contacts Zn(2+).

Belongs to the histidinol dehydrogenase family. The cofactor is Zn(2+).

The catalysed reaction is L-histidinol + 2 NAD(+) + H2O = L-histidine + 2 NADH + 3 H(+). It functions in the pathway amino-acid biosynthesis; L-histidine biosynthesis; L-histidine from 5-phospho-alpha-D-ribose 1-diphosphate: step 9/9. Functionally, catalyzes the sequential NAD-dependent oxidations of L-histidinol to L-histidinaldehyde and then to L-histidine. This chain is Histidinol dehydrogenase, found in Prochlorococcus marinus (strain MIT 9313).